The primary structure comprises 101 residues: Large ribosomal subunit protein uL24 (101 aa).

It belongs to the universal ribosomal protein uL24 family. In terms of assembly, part of the 50S ribosomal subunit.

In terms of biological role, one of two assembly initiator proteins, it binds directly to the 5'-end of the 23S rRNA, where it nucleates assembly of the 50S subunit. One of the proteins that surrounds the polypeptide exit tunnel on the outside of the subunit. The polypeptide is Large ribosomal subunit protein uL24 (Cereibacter sphaeroides (strain ATCC 17029 / ATH 2.4.9) (Rhodobacter sphaeroides)).